The primary structure comprises 355 residues: Uroporphyrinogen decarboxylase (355 aa).

Residues 27-31 (RQAGR), Asp77, Tyr154, Thr209, and His327 contribute to the substrate site.

Belongs to the uroporphyrinogen decarboxylase family. As to quaternary structure, homodimer.

Its subcellular location is the cytoplasm. The enzyme catalyses uroporphyrinogen III + 4 H(+) = coproporphyrinogen III + 4 CO2. The protein operates within porphyrin-containing compound metabolism; protoporphyrin-IX biosynthesis; coproporphyrinogen-III from 5-aminolevulinate: step 4/4. Its function is as follows. Catalyzes the decarboxylation of four acetate groups of uroporphyrinogen-III to yield coproporphyrinogen-III. This is Uroporphyrinogen decarboxylase from Aeromonas salmonicida (strain A449).